We begin with the raw amino-acid sequence, 196 residues long: Small ribosomal subunit protein uS4c (196 aa).

The tract at residues 17 to 36 is disordered; it reads ALPGLTRKTPKSGSNLKKKF. Residues 89-169 form the S4 RNA-binding domain; the sequence is MRLDNILFRL…LPKHLTIDTL (81 aa).

This sequence belongs to the universal ribosomal protein uS4 family. In terms of assembly, part of the 30S ribosomal subunit. Contacts protein S5. The interaction surface between S4 and S5 is involved in control of translational fidelity.

The protein resides in the plastid. Its subcellular location is the chloroplast. Its function is as follows. One of the primary rRNA binding proteins, it binds directly to 16S rRNA where it nucleates assembly of the body of the 30S subunit. With S5 and S12 plays an important role in translational accuracy. In Festuca gigantea (Giant fescue), this protein is Small ribosomal subunit protein uS4c (rps4).